Here is a 129-residue protein sequence, read N- to C-terminus: Modulator protein MzrA (129 aa).

At 1–14 the chain is on the cytoplasmic side; sequence MINFRGRFGRPLWH. Residues 15–35 traverse the membrane as a helical segment; sequence YLVLPVVLLLLAVILLTPMIV. Residues 36-129 are Periplasmic-facing; it reads QTESTLKIRP…VFRSNQQNLG (94 aa).

Belongs to the MzrA family. As to quaternary structure, interacts with EnvZ.

It is found in the cell inner membrane. Its function is as follows. Modulates the activity of the EnvZ/OmpR two-component regulatory system, probably by directly modulating EnvZ enzymatic activity and increasing stability of phosphorylated OmpR. In Yersinia pestis (strain Pestoides F), this protein is Modulator protein MzrA.